The sequence spans 245 residues: 1-(5-phosphoribosyl)-5-[(5-phosphoribosylamino)methylideneamino] imidazole-4-carboxamide isomerase (245 aa).

Catalysis depends on Asp15, which acts as the Proton acceptor. The active-site Proton donor is Asp135.

It belongs to the HisA/HisF family.

Its subcellular location is the cytoplasm. It catalyses the reaction 1-(5-phospho-beta-D-ribosyl)-5-[(5-phospho-beta-D-ribosylamino)methylideneamino]imidazole-4-carboxamide = 5-[(5-phospho-1-deoxy-D-ribulos-1-ylimino)methylamino]-1-(5-phospho-beta-D-ribosyl)imidazole-4-carboxamide. It participates in amino-acid biosynthesis; L-histidine biosynthesis; L-histidine from 5-phospho-alpha-D-ribose 1-diphosphate: step 4/9. This is 1-(5-phosphoribosyl)-5-[(5-phosphoribosylamino)methylideneamino] imidazole-4-carboxamide isomerase from Haloquadratum walsbyi (strain DSM 16790 / HBSQ001).